A 386-amino-acid chain; its full sequence is V-type proton ATPase subunit B 2 (386 aa).

The protein belongs to the ATPase alpha/beta chains family. As to quaternary structure, V-ATPase is a heteromultimeric enzyme composed of a peripheral catalytic V1 complex (main components: subunits A, B, C, D, E, and F) attached to an integral membrane V0 proton pore complex (main component: the proteolipid protein).

Its function is as follows. Non-catalytic subunit of the peripheral V1 complex of vacuolar ATPase. V-ATPase is responsible for acidifying a variety of intracellular compartments in eukaryotic cells. This chain is V-type proton ATPase subunit B 2, found in Gossypium hirsutum (Upland cotton).